A 28-amino-acid polypeptide reads, in one-letter code: Cycloviolin-B (28 aa).

A cross-link (cyclopeptide (Gly-Asn)) is located at residues 1 to 28 (GTACGESCYVLPCFTVGCTCTSSQCFKN). Disulfide bonds link Cys4–Cys18, Cys8–Cys20, and Cys13–Cys25.

This is a cyclic peptide.

In terms of biological role, probably participates in a plant defense mechanism. Has anti-HIV activity. The protein is Cycloviolin-B of Leonia cymosa (Sacha uba).